Here is a 468-residue protein sequence, read N- to C-terminus: 3-isopropylmalate dehydratase large subunit 2 (468 aa).

Residues Cys-349, Cys-409, and Cys-412 each contribute to the [4Fe-4S] cluster site.

Belongs to the aconitase/IPM isomerase family. LeuC type 1 subfamily. Heterodimer of LeuC and LeuD. Requires [4Fe-4S] cluster as cofactor.

The enzyme catalyses (2R,3S)-3-isopropylmalate = (2S)-2-isopropylmalate. It participates in amino-acid biosynthesis; L-leucine biosynthesis; L-leucine from 3-methyl-2-oxobutanoate: step 2/4. Functionally, catalyzes the isomerization between 2-isopropylmalate and 3-isopropylmalate, via the formation of 2-isopropylmaleate. In Bradyrhizobium diazoefficiens (strain JCM 10833 / BCRC 13528 / IAM 13628 / NBRC 14792 / USDA 110), this protein is 3-isopropylmalate dehydratase large subunit 2.